The chain runs to 201 residues: Putative 3-methyladenine DNA glycosylase (201 aa).

It belongs to the DNA glycosylase MPG family.

The polypeptide is Putative 3-methyladenine DNA glycosylase (Rhodopseudomonas palustris (strain HaA2)).